Consider the following 307-residue polypeptide: Golgi to ER traffic protein 2 (307 aa).

Residues 1–173 (MSDSTDSPAV…QAYDTYQQKL (173 aa)) are Cytoplasmic-facing. Over residues 41 to 52 (LSQGSSVKTTGV) the composition is skewed to polar residues. The disordered stretch occupies residues 41 to 73 (LSQGSSVKTTGVKSVLDEPQPTATSSAIHDEDP). A helical membrane pass occupies residues 174-194 (WKSRFLVIRVVVTLFNFFYHY). The Lumenal portion of the chain corresponds to 195-220 (LNVPSFHASNYSYVRDLAQDEFPVRN). The chain crosses the membrane as a helical span at residues 221–240 (FFTWFAAFEVIIVLQYYTVF). Topologically, residues 241 to 284 (HKLGLFHAANQNSMIMKLMSMGSMVLPQLNTYQPLVARFLGYYE) are cytoplasmic. A helical transmembrane segment spans residues 285 to 305 (LFGIIFGDLSLVIVLFGLLSF). At 306–307 (TK) the chain is on the lumenal side.

Belongs to the GET2 family. In terms of assembly, component of the Golgi to ER traffic (GET) complex, which is composed of GET1, GET2 and GET3. Within the complex, GET1 and GET2 form a heterotetramer which is stabilized by phosphatidylinositol binding and which binds to the GET3 homodimer.

The protein resides in the endoplasmic reticulum membrane. Its subcellular location is the golgi apparatus membrane. Functionally, required for the post-translational delivery of tail-anchored (TA) proteins to the endoplasmic reticulum. Together with GET1, acts as a membrane receptor for soluble GET3, which recognizes and selectively binds the transmembrane domain of TA proteins in the cytosol. The GET complex cooperates with the HDEL receptor ERD2 to mediate the ATP-dependent retrieval of resident ER proteins that contain a C-terminal H-D-E-L retention signal from the Golgi to the ER. The chain is Golgi to ER traffic protein 2 from Candida tropicalis (strain ATCC MYA-3404 / T1) (Yeast).